Reading from the N-terminus, the 426-residue chain is Enolase (426 aa).

Gln163 is a binding site for (2R)-2-phosphoglycerate. Glu205 acts as the Proton donor in catalysis. 3 residues coordinate Mg(2+): Asp242, Glu286, and Asp313. 4 residues coordinate (2R)-2-phosphoglycerate: Lys338, Arg367, Ser368, and Lys389. The Proton acceptor role is filled by Lys338.

Belongs to the enolase family. It depends on Mg(2+) as a cofactor.

It is found in the cytoplasm. The protein localises to the secreted. It localises to the cell surface. The enzyme catalyses (2R)-2-phosphoglycerate = phosphoenolpyruvate + H2O. The protein operates within carbohydrate degradation; glycolysis; pyruvate from D-glyceraldehyde 3-phosphate: step 4/5. Catalyzes the reversible conversion of 2-phosphoglycerate (2-PG) into phosphoenolpyruvate (PEP). It is essential for the degradation of carbohydrates via glycolysis. In Helicobacter pylori (strain J99 / ATCC 700824) (Campylobacter pylori J99), this protein is Enolase.